The chain runs to 861 residues: ToMV susceptible protein tm-2 (861 aa).

Positions 63–83 (VKNLLKDIQELAGDVEDLLDD) form a coiled coil. Positions 162 to 388 (DDFNMLQAKL…LESMGHKVQD (227 aa)) constitute an NB-ARC domain. Residue 185–192 (GMPGLGKT) coordinates ATP. LRR repeat units lie at residues 225–248 (LDIAKQIGLTEQKIKENLEDNLRS), 305–327 (LHALQPLESEKSFELFTKKIFNF), 388–411 (DGCAKVLALSYNDLPIASRPCFLY), 449–472 (LAEDVLNDLVSRNLIQLAKRTYNG), 510–536 (VARLRRITFYSDNVMIEFFGSNPKLEK), 585–608 (MTCLRYLKLEGNICGKLPNSIVKL), 609–631 (TRLETIDIDRRSLIQLPSGVWES), 652–680 (ISSFYPNIYSLHPNNLQTLMWIPDKFFEP), 689–713 (LRKLGILGVSNSTVKILSTCRPVPK), 735–758 (YPKIVKLHLNVDRTIALNSEAFPP), 781–804 (LPKLRKLKMVICKYNEEKMALSGE), and 810–835 (FPQLEVLHIHSPNGLSEVTCTDDVSM).

The protein belongs to the disease resistance NB-LRR family. In terms of assembly, (Microbial infection) Fails to interact with the tobamovirus mouvement protein of tobacco mosaic virus (TMV).

The protein resides in the cell membrane. Its function is as follows. Potential inhibitor of viral mouvements which may confer resistance to some tobamoviruses but not to the tomato mosaic virus (ToMV) and tobacco mosaic virus (TMV). The polypeptide is ToMV susceptible protein tm-2 (Solanum lycopersicum (Tomato)).